The primary structure comprises 325 residues: Beta-ketoacyl-[acyl-carrier-protein] synthase III (325 aa).

Active-site residues include cysteine 112 and histidine 250. The segment at glutamine 251–arginine 255 is ACP-binding. Asparagine 280 is an active-site residue.

The protein belongs to the thiolase-like superfamily. FabH family. In terms of assembly, homodimer.

The protein resides in the cytoplasm. It carries out the reaction malonyl-[ACP] + acetyl-CoA + H(+) = 3-oxobutanoyl-[ACP] + CO2 + CoA. It participates in lipid metabolism; fatty acid biosynthesis. In terms of biological role, catalyzes the condensation reaction of fatty acid synthesis by the addition to an acyl acceptor of two carbons from malonyl-ACP. Catalyzes the first condensation reaction which initiates fatty acid synthesis and may therefore play a role in governing the total rate of fatty acid production. Possesses both acetoacetyl-ACP synthase and acetyl transacylase activities. Its substrate specificity determines the biosynthesis of branched-chain and/or straight-chain of fatty acids. This is Beta-ketoacyl-[acyl-carrier-protein] synthase III from Clostridium acetobutylicum (strain ATCC 824 / DSM 792 / JCM 1419 / IAM 19013 / LMG 5710 / NBRC 13948 / NRRL B-527 / VKM B-1787 / 2291 / W).